We begin with the raw amino-acid sequence, 446 residues long: Exodeoxyribonuclease 7 large subunit (446 aa).

Belongs to the XseA family. Heterooligomer composed of large and small subunits.

It localises to the cytoplasm. It carries out the reaction Exonucleolytic cleavage in either 5'- to 3'- or 3'- to 5'-direction to yield nucleoside 5'-phosphates.. Functionally, bidirectionally degrades single-stranded DNA into large acid-insoluble oligonucleotides, which are then degraded further into small acid-soluble oligonucleotides. In Streptococcus pyogenes serotype M3 (strain ATCC BAA-595 / MGAS315), this protein is Exodeoxyribonuclease 7 large subunit.